Here is a 618-residue protein sequence, read N- to C-terminus: Chaperone protein HscA homolog (618 aa).

This sequence belongs to the heat shock protein 70 family.

Its function is as follows. Chaperone involved in the maturation of iron-sulfur cluster-containing proteins. Has a low intrinsic ATPase activity which is markedly stimulated by HscB. The sequence is that of Chaperone protein HscA homolog from Variovorax paradoxus (strain S110).